Reading from the N-terminus, the 643-residue chain is Alpha-dioxygenase 1 (643 aa).

Catalysis depends on His-167, which acts as the Proton acceptor. Position 168 (Asp-168) interacts with Ca(2+). His-172 is a binding site for heme b. Thr-220, Trp-222, Asp-224, and Ser-226 together coordinate Ca(2+). His-392, Arg-489, and Arg-493 together coordinate heme b.

It belongs to the peroxidase family. It depends on heme b as a cofactor. Requires Ca(2+) as cofactor.

Alpha-dioxygenase that catalyzes the primary oxygenation step of a variety of 14-20 carbon fatty acids, containing up to three unsaturated bonds, into their corresponding 2R-hydroperoxides. Involved in the production of oxylipins that function in cell signaling, wound healing, and protection from infection. The lipid-derived signaling pathway is involved in the initial response of hot pepper plants to pathogen infection. The polypeptide is Alpha-dioxygenase 1 (Capsicum annuum (Capsicum pepper)).